A 2188-amino-acid polypeptide reads, in one-letter code: Phenolphthiocerol/phthiocerol polyketide synthase subunit C (2188 aa).

The region spanning 34–462 is the Ketosynthase family 3 (KS3) domain; sequence SEPIAVIGMG…GTNAHVVIEQ (429 aa). Active-site for beta-ketoacyl synthase activity residues include Cys-210, His-345, and His-384. The acyltransferase stretch occupies residues 572 to 890; it reads VFVYSGRGSQ…NLNTTHTTHP (319 aa). Residue Ser-660 is the For malonyltransferase activity of the active site. The N-terminal hotdog fold stretch occupies residues 928–1050; sequence HPLLGVGVTD…ATVARAEPLA (123 aa). The tract at residues 928 to 1093 is dehydratase; it reads HPLLGVGVTD…QQHGPAFQGI (166 aa). Positions 928 to 1223 constitute a PKS/mFAS DH domain; sequence HPLLGVGVTD…MAVLGSGSGA (296 aa). His-959 serves as the catalytic Proton acceptor; for dehydratase activity. The interval 1067 to 1223 is C-terminal hotdog fold; that stretch reads EDQLDPDDLY…MAVLGSGSGA (157 aa). The active-site Proton donor; for dehydratase activity is Asp-1129. The enoylreductase stretch occupies residues 1467 to 1778; sequence GRLDALNVHE…SGKHTGKIVI (312 aa). Residues 1802-1981 form a beta-ketoacyl reductase region; sequence GGYLIVGGMG…GINWGPWADV (180 aa). 1803–1848 contributes to the NADP(+) binding site; sequence GYLIVGGMGGLGFVVARWLAEQGAGLIVLNGRSAPSDEVAAAIAEL. In terms of domain architecture, Carrier spans 2069 to 2145; that stretch reads ERPGHLASAI…DLATALCERM (77 aa). At Ser-2105 the chain carries O-(pantetheine 4'-phosphoryl)serine.

Homodimer. NADP(+) serves as cofactor. It depends on pantetheine 4'-phosphate as a cofactor.

It carries out the reaction icosanoyl-[(phenol)carboxyphthiodiolenone synthase] + 2 (S)-methylmalonyl-CoA + 3 malonyl-CoA + 5 NADPH + 10 H(+) = C32-carboxyphthiodiolenone-[(phenol)carboxyphthiodiolenone synthase] + 5 CO2 + 5 NADP(+) + 5 CoA + 2 H2O. The enzyme catalyses docosanoyl-[(phenol)carboxyphthiodiolenone synthase] + 2 (S)-methylmalonyl-CoA + 3 malonyl-CoA + 5 NADPH + 10 H(+) = C34-carboxyphthiodiolenone-[(phenol)carboxyphthiodiolenone synthase] + 5 CO2 + 5 NADP(+) + 5 CoA + 2 H2O. The catalysed reaction is 17-(4-hydroxyphenyl)heptadecanoyl-[(phenol)carboxyphthiodiolenone synthase] + 2 (S)-methylmalonyl-CoA + 3 malonyl-CoA + 5 NADPH + 10 H(+) = C35-(phenol)carboxyphthiodiolenone-[(phenol)carboxyphthiodiolenone synthase] + 5 CO2 + 5 NADP(+) + 5 CoA + 2 H2O. It catalyses the reaction 19-(4-hydroxyphenyl)nonadecanoyl-[(phenol)carboxyphthiodiolenone synthase] + 2 (S)-methylmalonyl-CoA + 3 malonyl-CoA + 5 NADPH + 10 H(+) = C37-(phenol)carboxyphthiodiolenone-[(phenol)carboxyphthiodiolenone synthase] + 5 CO2 + 5 NADP(+) + 5 CoA + 2 H2O. It participates in lipid metabolism; fatty acid biosynthesis. Its function is as follows. Part of the PpsABCDE complex involved in the biosynthesis of the lipid core common to phthiocerols and phenolphthiocerols by successive additions of malonyl-CoA or methylmalonyl-CoA extender units. PpsA can accept as substrate the activated forms of either icosanoyl (C20), docosanoyl (C22) or lignoceroyl (C24) groups from FadD26, or a (4-hydroxyphenyl)-C17 or (4-hydroxyphenyl)-C19 fatty acyl from FadD29. PpsA initiates the biosynthesis and extends its substrate using a malonyl-CoA extender unit. The PpsB and PpsC proteins add the second and third malonyl-CoA extender units. PpsD adds an (R)-methylmalonyl unit and PpsE adds a second (R)-methylmalonyl unit. The incorporation of the methylmalonyl units results in formation of two branched methyl groups in the elongated product. The sequence is that of Phenolphthiocerol/phthiocerol polyketide synthase subunit C (ppsC) from Mycobacterium bovis (strain ATCC BAA-935 / AF2122/97).